Reading from the N-terminus, the 282-residue chain is Armadillo repeat-containing protein 1 (282 aa).

Methionine 1 bears the N-acetylmethionine mark. One copy of the ARM repeat lies at 39 to 81; the sequence is GCLPGLILFMDHPNPPVVHSALLALRYLAECRANREKMKGELG. Threonine 137 is subject to Phosphothreonine. Phosphoserine is present on residues serine 189, serine 246, serine 260, and serine 267. The segment at 239–261 is disordered; that stretch reads DYLPEDESPTKEQDKAVSRVGSH. Over residues 246–255 the composition is skewed to basic and acidic residues; it reads SPTKEQDKAV.

In terms of assembly, interacts with mitochondrial contact site and cristae organizing system (MICOS) complex components IMMT/MIC60 and MICOS10/MIC10. Interacts with mitochondrial outer membrane sorting assembly machinery (SAM) complex components SAMM50 and MTX1.

Its subcellular location is the cytoplasm. It localises to the mitochondrion. It is found in the mitochondrion outer membrane. In terms of biological role, in association with mitochondrial contact site and cristae organizing system (MICOS) complex components and mitochondrial outer membrane sorting assembly machinery (SAM) complex components may regulate mitochondrial dynamics playing a role in determining mitochondrial length, distribution and motility. The polypeptide is Armadillo repeat-containing protein 1 (ARMC1) (Bos taurus (Bovine)).